A 147-amino-acid chain; its full sequence is 3-dehydroquinate dehydratase (147 aa).

The active-site Proton acceptor is the Y23. Residues N75, H81, and D88 each contribute to the substrate site. H101 functions as the Proton donor in the catalytic mechanism. Substrate contacts are provided by residues 102–103 (LS) and R112.

It belongs to the type-II 3-dehydroquinase family. In terms of assembly, homododecamer.

The enzyme catalyses 3-dehydroquinate = 3-dehydroshikimate + H2O. It functions in the pathway metabolic intermediate biosynthesis; chorismate biosynthesis; chorismate from D-erythrose 4-phosphate and phosphoenolpyruvate: step 3/7. Catalyzes a trans-dehydration via an enolate intermediate. This chain is 3-dehydroquinate dehydratase, found in Nitrosococcus oceani (strain ATCC 19707 / BCRC 17464 / JCM 30415 / NCIMB 11848 / C-107).